A 390-amino-acid chain; its full sequence is Lipid-A-disaccharide synthase (390 aa).

Belongs to the LpxB family.

It catalyses the reaction a lipid X + a UDP-2-N,3-O-bis[(3R)-3-hydroxyacyl]-alpha-D-glucosamine = a lipid A disaccharide + UDP + H(+). Its pathway is bacterial outer membrane biogenesis; LPS lipid A biosynthesis. In terms of biological role, condensation of UDP-2,3-diacylglucosamine and 2,3-diacylglucosamine-1-phosphate to form lipid A disaccharide, a precursor of lipid A, a phosphorylated glycolipid that anchors the lipopolysaccharide to the outer membrane of the cell. This Haemophilus ducreyi (strain 35000HP / ATCC 700724) protein is Lipid-A-disaccharide synthase.